The chain runs to 185 residues: Photosystem I assembly protein Ycf4 (185 aa).

Helical transmembrane passes span 21 to 43 (NFFW…ISSY) and 63 to 85 (GVVM…CTIL).

It belongs to the Ycf4 family.

The protein localises to the plastid. The protein resides in the chloroplast thylakoid membrane. Functionally, seems to be required for the assembly of the photosystem I complex. This chain is Photosystem I assembly protein Ycf4, found in Aegilops crassa (Persian goatgrass).